Here is a 362-residue protein sequence, read N- to C-terminus: Peptide chain release factor 1 (362 aa).

Q236 is modified (N5-methylglutamine).

It belongs to the prokaryotic/mitochondrial release factor family. In terms of processing, methylated by PrmC. Methylation increases the termination efficiency of RF1.

The protein resides in the cytoplasm. Its function is as follows. Peptide chain release factor 1 directs the termination of translation in response to the peptide chain termination codons UAG and UAA. The chain is Peptide chain release factor 1 from Lactobacillus helveticus (strain DPC 4571).